Consider the following 95-residue polypeptide: Protein NCBP2AS2 homolog (95 aa).

This chain is Protein NCBP2AS2 homolog, found in Ixodes scapularis (Black-legged tick).